The primary structure comprises 343 residues: Phenylalanine--tRNA ligase alpha subunit (343 aa).

A Mg(2+)-binding site is contributed by Glu264.

It belongs to the class-II aminoacyl-tRNA synthetase family. Phe-tRNA synthetase alpha subunit type 1 subfamily. In terms of assembly, tetramer of two alpha and two beta subunits. Mg(2+) serves as cofactor.

Its subcellular location is the cytoplasm. It catalyses the reaction tRNA(Phe) + L-phenylalanine + ATP = L-phenylalanyl-tRNA(Phe) + AMP + diphosphate + H(+). The chain is Phenylalanine--tRNA ligase alpha subunit from Aromatoleum aromaticum (strain DSM 19018 / LMG 30748 / EbN1) (Azoarcus sp. (strain EbN1)).